We begin with the raw amino-acid sequence, 503 residues long: AQLVDSMPSASTGSVVVTDDLNYWGGRRIKSKDGATTEPVFEPATGRVLCQMVPCGAEEVDQAVQSAQAAYLKWSKMAGIERSRVMLEAARIIRERRDNIAKLEVINNGKTITEAEYDIDAAWQCIEYYAGLAPTLSGQHIQLPGGAFAYTRREPLGVCAGILAWNYPFMIAAWKCAPALACGNAVVFKPSPMTPVTGVILAEIFHEAGVPVGLVNVVQGGAETGSLLCHHPNVAKVSFTGSVPTGKKVMEMSAKTVKHVTLELGGKSPLLIFKDCELENAVRGALMANFLTQGQVCTNGTRVFVQREIMPQFLEEVVKRTKAIVVGDPLLTETRMGGLISKPQLDKVLGFVAQAKKEGARVLCGGEPLTPSDPKLKNGYFMSPCVLDNCRDDMTCVKEEIFGPVMSVLPFDTEEEVLQRANNTTFGLASGVFTRDISRAHRVAANLEAGTCYINTYSISPVEVPFGGYKMSGFGRENGQATVDYYSQLKTVIVEMGDVDSLF.

NAD(+) is bound by residues Lys-189 and 241-245; that span reads GSVPT. The active-site Proton acceptor is Glu-263. The active-site Nucleophile is the Cys-297. Glu-400 is an NAD(+) binding site.

It belongs to the aldehyde dehydrogenase family. In terms of assembly, homotetramer.

It is found in the cytoplasm. The protein resides in the cytosol. The enzyme catalyses 4-(trimethylamino)butanal + NAD(+) + H2O = 4-(trimethylamino)butanoate + NADH + 2 H(+). It carries out the reaction an aldehyde + NAD(+) + H2O = a carboxylate + NADH + 2 H(+). The protein operates within amine and polyamine biosynthesis; carnitine biosynthesis. Converts gamma-trimethylaminobutyraldehyde into gamma-butyrobetaine with high efficiency (in vitro). Can catalyze the irreversible oxidation of a broad range of aldehydes to the corresponding acids in an NAD-dependent reaction, but with low efficiency. The protein is 4-trimethylaminobutyraldehyde dehydrogenase (aldh9A1) of Gadus morhua subsp. callarias (Baltic cod).